A 492-amino-acid polypeptide reads, in one-letter code: Proline--tRNA ligase (492 aa).

Belongs to the class-II aminoacyl-tRNA synthetase family. ProS type 3 subfamily. Homodimer.

It localises to the cytoplasm. The catalysed reaction is tRNA(Pro) + L-proline + ATP = L-prolyl-tRNA(Pro) + AMP + diphosphate. In terms of biological role, catalyzes the attachment of proline to tRNA(Pro) in a two-step reaction: proline is first activated by ATP to form Pro-AMP and then transferred to the acceptor end of tRNA(Pro). This is Proline--tRNA ligase from Christiangramia forsetii (strain DSM 17595 / CGMCC 1.15422 / KT0803) (Gramella forsetii).